Reading from the N-terminus, the 492-residue chain is Cobyric acid synthase (492 aa).

Residues 253 to 441 (VLKVIAPVYP…LHGLFDTPQA (189 aa)) form the GATase cobBQ-type domain. Catalysis depends on Cys334, which acts as the Nucleophile. The active site involves His433.

The protein belongs to the CobB/CobQ family. CobQ subfamily.

The protein operates within cofactor biosynthesis; adenosylcobalamin biosynthesis. Functionally, catalyzes amidations at positions B, D, E, and G on adenosylcobyrinic A,C-diamide. NH(2) groups are provided by glutamine, and one molecule of ATP is hydrogenolyzed for each amidation. This chain is Cobyric acid synthase, found in Azoarcus sp. (strain BH72).